Consider the following 65-residue polypeptide: Large ribosomal subunit protein uL29 (65 aa).

Belongs to the universal ribosomal protein uL29 family.

The protein is Large ribosomal subunit protein uL29 of Lactobacillus johnsonii (strain CNCM I-12250 / La1 / NCC 533).